A 287-amino-acid polypeptide reads, in one-letter code: Putative B3 domain-containing protein Os08g0157700 (287 aa).

A compositionally biased stretch (acidic residues) spans 17 to 29; it reads ATEEEEEEEEEEQ. Positions 17–36 are disordered; sequence ATEEEEEEEEEEQALGQEPA. The TF-B3 DNA-binding region spans 71-168; the sequence is FDKVVTPSDV…RYFIDYRHCH (98 aa).

It localises to the nucleus. The chain is Putative B3 domain-containing protein Os08g0157700 from Oryza sativa subsp. japonica (Rice).